The primary structure comprises 329 residues: Acrosin (329 aa).

The N-terminal stretch at 1–17 is a signal peptide; it reads MLPTAVLLVLAVSVVAR. N-linked (GlcNAc...) asparagine glycosylation is present at N19. 6 disulfide bridges follow: C22–C152, C26–C160, C71–C87, C175–C244, C207–C223, and C234–C264. In terms of domain architecture, Peptidase S1 spans 40–288; it reads IIGGQDAAHG…YLNWIASKIG (249 aa). Residues H86 and D140 each act as charge relay system in the active site. N208 is a glycosylation site (N-linked (GlcNAc...) asparagine). The Charge relay system role is filled by S238.

This sequence belongs to the peptidase S1 family. Heavy chain (catalytic) and a light chain linked by two disulfide bonds. Forms a heterodimer with SERPINA5.

The catalysed reaction is Preferential cleavage: Arg-|-Xaa, Lys-|-Xaa.. Inhibited by SERPINA5. Its function is as follows. Acrosin is the major protease of mammalian spermatozoa. It is a serine protease of trypsin-like cleavage specificity, it is synthesized in a zymogen form, proacrosin and stored in the acrosome. The sequence is that of Acrosin (ACR) from Ovis aries (Sheep).